The primary structure comprises 84 residues: Large ribosomal subunit protein eL34 (84 aa).

The protein belongs to the eukaryotic ribosomal protein eL34 family.

The sequence is that of Large ribosomal subunit protein eL34 from Pyrobaculum calidifontis (strain DSM 21063 / JCM 11548 / VA1).